The following is a 175-amino-acid chain: Ribonuclease M5 (175 aa).

One can recognise a Toprim domain in the interval 3–83; that stretch reads NEIIIVEGKS…DVDVFNAFVS (81 aa). Residues Glu9, Asp57, and Asp59 each contribute to the Mg(2+) site.

The protein belongs to the ribonuclease M5 family. Mg(2+) is required as a cofactor.

The protein localises to the cytoplasm. The catalysed reaction is Endonucleolytic cleavage of RNA, removing 21 and 42 nucleotides, respectively, from the 5'- and 3'-termini of a 5S-rRNA precursor.. In terms of biological role, required for correct processing of both the 5' and 3' ends of 5S rRNA precursor. Cleaves both sides of a double-stranded region yielding mature 5S rRNA in one step. The sequence is that of Ribonuclease M5 from Mesoplasma florum (strain ATCC 33453 / NBRC 100688 / NCTC 11704 / L1) (Acholeplasma florum).